Here is a 303-residue protein sequence, read N- to C-terminus: Glutamyl-Q tRNA(Asp) synthetase (303 aa).

L-glutamate-binding positions include 9–13 (RFAPS) and Glu-45. The 'HIGH' region signature appears at 12-22 (PSPSGSLHFGS). Zn(2+) is bound by residues Cys-101, Cys-103, Tyr-115, and Cys-119. Residues Tyr-172 and Arg-190 each coordinate L-glutamate. A 'KMSKS' region motif is present at residues 228 to 232 (KLSKQ). Lys-231 is an ATP binding site.

The protein belongs to the class-I aminoacyl-tRNA synthetase family. GluQ subfamily. Zn(2+) is required as a cofactor.

Catalyzes the tRNA-independent activation of glutamate in presence of ATP and the subsequent transfer of glutamate onto a tRNA(Asp). Glutamate is transferred on the 2-amino-5-(4,5-dihydroxy-2-cyclopenten-1-yl) moiety of the queuosine in the wobble position of the QUC anticodon. This chain is Glutamyl-Q tRNA(Asp) synthetase, found in Serratia proteamaculans (strain 568).